The following is a 251-amino-acid chain: MTEAQRHQILLEMLAQLGFVTVEKVVERLGISPATARRDINKLDESGKLKKVRNGAEAITQQRPRWTPMNLHQAQNHDEKVRIAKAASQLVNPGESVVINCGSTAFLLGREMCGKPVQIITNYLPLANYLIDQEHDSVIIMGGQYNKSQSITLSPQGSENSLYAGHWMFTSGKGLTAEGLYKTDMLTAMAEQKMLSVVGKLVVLVDSSKIGERAGMLFSRADQIDMLITGKNANPEILQQLEAQGVSIMRV.

In terms of domain architecture, HTH deoR-type spans 3 to 58; it reads EAQRHQILLEMLAQLGFVTVEKVVERLGISPATARRDINKLDESGKLKKVRNGAEA. The H-T-H motif DNA-binding region spans 20-39; that stretch reads VTVEKVVERLGISPATARRD.

The protein resides in the cytoplasm. Functionally, represses ulaG and the ulaABCDEF operon. The protein is HTH-type transcriptional regulator UlaR of Escherichia coli O127:H6 (strain E2348/69 / EPEC).